A 114-amino-acid polypeptide reads, in one-letter code: MAQGKGFGFGLGKIKELQEAFQKAQQVQEGAKQLQDELEQMSIEGHSSDGSVTVVMSGNQEPRSVTIQPTALEKGAEELSTLVTEAMKDAYSKSTDTMRQKMEELTSGLNLPGL.

Belongs to the YbaB/EbfC family. As to quaternary structure, homodimer.

It localises to the cytoplasm. The protein resides in the nucleoid. Functionally, binds to DNA and alters its conformation. May be involved in regulation of gene expression, nucleoid organization and DNA protection. The chain is Nucleoid-associated protein PCC7424_2224 from Gloeothece citriformis (strain PCC 7424) (Cyanothece sp. (strain PCC 7424)).